The chain runs to 275 residues: Myoblast determination protein 1 homolog 2 (275 aa).

In terms of domain architecture, bHLH spans aspartate 84 to leucine 135. The segment covering serine 232–glutamine 265 has biased composition (polar residues). Residues serine 232–leucine 275 form a disordered region.

In terms of assembly, efficient DNA binding requires dimerization with another bHLH protein.

Its subcellular location is the nucleus. In terms of biological role, may act as a transcriptional activator that promotes transcription of muscle-specific target genes and plays a role in muscle differentiation. In Oncorhynchus mykiss (Rainbow trout), this protein is Myoblast determination protein 1 homolog 2 (myod2).